The primary structure comprises 554 residues: Glucose-6-phosphate isomerase (554 aa).

Residue E358 is the Proton donor of the active site. Residues H389 and K515 contribute to the active site.

It belongs to the GPI family.

The protein localises to the cytoplasm. The enzyme catalyses alpha-D-glucose 6-phosphate = beta-D-fructose 6-phosphate. Its pathway is carbohydrate biosynthesis; gluconeogenesis. The protein operates within carbohydrate degradation; glycolysis; D-glyceraldehyde 3-phosphate and glycerone phosphate from D-glucose: step 2/4. Catalyzes the reversible isomerization of glucose-6-phosphate to fructose-6-phosphate. The chain is Glucose-6-phosphate isomerase from Mycobacterium leprae (strain Br4923).